Here is a 291-residue protein sequence, read N- to C-terminus: MTERDFDTPVETPTVQPAPAQGAKPAQTVPVVAVVLAAGFGTRFDPDNPKQLVSVGGKPIVCWSIDAFEHCDRVSDIVVVVNPKVRGEVETLVGEMGYTKVRVIIDGGDERVDSTATALDMLATAGIPDDAKILIHDAVRPFVEQSAIDGSIDALDQFTAATVAYASTDTVLLTEDLGDLKVVKSVPDRPNTFRAQTPQSFRFATIRHAYDLAAADPDFHPTDDTRVVVDYLPDEPVAIVSGAETNLKITTLEDIPTAERIAEEILGRDPKEEARARMHALLAQAAGQMHR.

Positions 1–23 (MTERDFDTPVETPTVQPAPAQGA) are disordered.

The protein belongs to the IspD/TarI cytidylyltransferase family. IspD subfamily.

It catalyses the reaction 2-C-methyl-D-erythritol 4-phosphate + CTP + H(+) = 4-CDP-2-C-methyl-D-erythritol + diphosphate. It functions in the pathway isoprenoid biosynthesis; isopentenyl diphosphate biosynthesis via DXP pathway; isopentenyl diphosphate from 1-deoxy-D-xylulose 5-phosphate: step 2/6. In terms of biological role, catalyzes the formation of 4-diphosphocytidyl-2-C-methyl-D-erythritol from CTP and 2-C-methyl-D-erythritol 4-phosphate (MEP). This is 2-C-methyl-D-erythritol 4-phosphate cytidylyltransferase from Bifidobacterium longum (strain NCC 2705).